Here is a 103-residue protein sequence, read N- to C-terminus: Large ribosomal subunit protein uL24 (103 aa).

The protein belongs to the universal ribosomal protein uL24 family. In terms of assembly, part of the 50S ribosomal subunit.

Its function is as follows. One of two assembly initiator proteins, it binds directly to the 5'-end of the 23S rRNA, where it nucleates assembly of the 50S subunit. Functionally, one of the proteins that surrounds the polypeptide exit tunnel on the outside of the subunit. The sequence is that of Large ribosomal subunit protein uL24 from Lachnospira eligens (strain ATCC 27750 / DSM 3376 / VPI C15-48 / C15-B4) (Eubacterium eligens).